Reading from the N-terminus, the 121-residue chain is UPF0295 protein BH0952 (121 aa).

The next 2 membrane-spanning stretches (helical) occupy residues 12 to 32 (IRTFALSLVFLGILVMYIGIF) and 41 to 61 (VLAMILGFLCIIASTAVYFWI).

Belongs to the UPF0295 family.

Its subcellular location is the cell membrane. This is UPF0295 protein BH0952 from Halalkalibacterium halodurans (strain ATCC BAA-125 / DSM 18197 / FERM 7344 / JCM 9153 / C-125) (Bacillus halodurans).